The sequence spans 92 residues: Small ribosomal subunit protein uS19 (92 aa).

The protein belongs to the universal ribosomal protein uS19 family.

Functionally, protein S19 forms a complex with S13 that binds strongly to the 16S ribosomal RNA. The sequence is that of Small ribosomal subunit protein uS19 from Phenylobacterium zucineum (strain HLK1).